The sequence spans 581 residues: Leucine-rich repeat transmembrane neuronal protein 3 (581 aa).

The N-terminal stretch at 1–30 is a signal peptide; it reads MGFNVIRLLSGSAVALVIAPTVLLTMLSSA. Residues 31-61 form the LRRNT domain; that stretch reads ERGCPKGCRCEGKMVYCESQKLQEIPSSISA. Over 31 to 419 the chain is Extracellular; it reads ERGCPKGCRC…ADAEHISFHK (389 aa). LRR repeat units follow at residues 63–83, 86–107, 110–131, 134–155, 158–179, 182–203, 206–226, 230–251, 254–275, and 279–300; these read CLGL…QFKG, QLTW…AFNG, RLKE…TFRP, NLRN…QFRG, KLLS…IFQD, NLEL…VFAG, RLKE…ALFP, SLQN…MSWT, SLQR…SVFQ, and NLQR…ILDS. N-linked (GlcNAc...) asparagine glycosylation occurs at Asn-126. One can recognise an LRRCT domain in the interval 312 to 363; it reads NIWECSRNICSLVNWLKSFKGLRENTIICASPKELQGVNVIDAVKNYSICGK. Residue Asn-357 is glycosylated (N-linked (GlcNAc...) asparagine). The segment at 377–408 is disordered; it reads KPTFKPKLPRPKHESKPPLPPTVGATEPGPET. A helical transmembrane segment spans residues 420–440; it reads IIAGSVALFLSVLVILLVIYV. Residues 441 to 581 are Cytoplasmic-facing; the sequence is SWKRYPASMK…RISDHKQQLA (141 aa).

This sequence belongs to the LRRTM family. In terms of tissue distribution, expressed in neuronal tissues.

Its subcellular location is the cell membrane. It localises to the postsynaptic cell membrane. Its function is as follows. Exhibits a limited synaptogenic activity in vitro, restricted to excitatory presynaptic differentiation. May play a role in the development and maintenance of the vertebrate nervous system. The polypeptide is Leucine-rich repeat transmembrane neuronal protein 3 (LRRTM3) (Homo sapiens (Human)).